The primary structure comprises 190 residues: UPF0301 protein RSc0675 (190 aa).

It belongs to the UPF0301 (AlgH) family.

This chain is UPF0301 protein RSc0675, found in Ralstonia nicotianae (strain ATCC BAA-1114 / GMI1000) (Ralstonia solanacearum).